The primary structure comprises 247 residues: Adenosylcobinamide-GDP ribazoletransferase (247 aa).

5 helical membrane-spanning segments follow: residues isoleucine 34–valine 54, alanine 57–glycine 77, glycine 113–leucine 133, isoleucine 138–tyrosine 158, and valine 194–isoleucine 214.

This sequence belongs to the CobS family. It depends on Mg(2+) as a cofactor.

It localises to the cell inner membrane. The catalysed reaction is alpha-ribazole + adenosylcob(III)inamide-GDP = adenosylcob(III)alamin + GMP + H(+). It carries out the reaction alpha-ribazole 5'-phosphate + adenosylcob(III)inamide-GDP = adenosylcob(III)alamin 5'-phosphate + GMP + H(+). It functions in the pathway cofactor biosynthesis; adenosylcobalamin biosynthesis; adenosylcobalamin from cob(II)yrinate a,c-diamide: step 7/7. Functionally, joins adenosylcobinamide-GDP and alpha-ribazole to generate adenosylcobalamin (Ado-cobalamin). Also synthesizes adenosylcobalamin 5'-phosphate from adenosylcobinamide-GDP and alpha-ribazole 5'-phosphate. This is Adenosylcobinamide-GDP ribazoletransferase from Shigella flexneri.